We begin with the raw amino-acid sequence, 429 residues long: Histidine--tRNA ligase (429 aa).

It belongs to the class-II aminoacyl-tRNA synthetase family. Homodimer.

Its subcellular location is the cytoplasm. The enzyme catalyses tRNA(His) + L-histidine + ATP = L-histidyl-tRNA(His) + AMP + diphosphate + H(+). This Pseudomonas fluorescens (strain Pf0-1) protein is Histidine--tRNA ligase.